Here is a 122-residue protein sequence, read N- to C-terminus: Large ribosomal subunit protein eL34 (122 aa).

It belongs to the eukaryotic ribosomal protein eL34 family. In terms of assembly, component of the large ribosomal subunit. Mature ribosomes consist of a small (40S) and a large (60S) subunit. The 40S subunit contains about 32 different proteins and 1 molecule of RNA (18S). The 60S subunit contains 45 different proteins and 3 molecules of RNA (25S, 5.8S and 5S).

Its subcellular location is the cytoplasm. Its function is as follows. Component of the ribosome, a large ribonucleoprotein complex responsible for the synthesis of proteins in the cell. The small ribosomal subunit (SSU) binds messenger RNAs (mRNAs) and translates the encoded message by selecting cognate aminoacyl-transfer RNA (tRNA) molecules. The large subunit (LSU) contains the ribosomal catalytic site termed the peptidyl transferase center (PTC), which catalyzes the formation of peptide bonds, thereby polymerizing the amino acids delivered by tRNAs into a polypeptide chain. The nascent polypeptides leave the ribosome through a tunnel in the LSU and interact with protein factors that function in enzymatic processing, targeting, and the membrane insertion of nascent chains at the exit of the ribosomal tunnel. This chain is Large ribosomal subunit protein eL34, found in Candida albicans (strain SC5314 / ATCC MYA-2876) (Yeast).